Consider the following 96-residue polypeptide: Protein Vpr (96 aa).

The tract at residues 1–42 is homooligomerization; it reads MEQAPEDQGPQREPHNEWTLELLEELKNEAVRHFPRIWLHGL. 3 positions are modified to phosphoserine; by host: Ser-79, Ser-94, and Ser-96.

This sequence belongs to the HIV-1 VPR protein family. Homooligomer, may form homodimer. Interacts with p6-gag region of the Pr55 Gag precursor protein through a (Leu-X-X)4 motif near the C-terminus of the P6gag protein. Interacts with host UNG. May interact with host RAD23A/HHR23A. Interacts with host VPRBP/DCAF1, leading to hijack the CUL4A-RBX1-DDB1-DCAF1/VPRBP complex, mediating ubiquitination of host proteins such as TERT and ZGPAT and arrest of the cell cycle in G2 phase. Post-translationally, phosphorylated on several residues by host. These phosphorylations regulate VPR activity for the nuclear import of the HIV-1 pre-integration complex.

Its subcellular location is the virion. The protein resides in the host nucleus. The protein localises to the host extracellular space. Functionally, during virus entry, plays a role in the transport of the viral pre-integration (PIC) complex to the host nucleus. This function is crucial for viral infection of non-dividing macrophages. May act directly at the nuclear pore complex, by binding nucleoporins phenylalanine-glycine (FG)-repeat regions. In terms of biological role, during virus replication, may deplete host UNG protein, and incude G2-M cell cycle arrest. Acts by targeting specific host proteins for degradation by the 26S proteasome, through association with the cellular CUL4A-DDB1 E3 ligase complex by direct interaction with host VPRPB/DCAF-1. Cell cycle arrest reportedly occurs within hours of infection and is not blocked by antiviral agents, suggesting that it is initiated by the VPR carried into the virion. Additionally, VPR induces apoptosis in a cell cycle dependent manner suggesting that these two effects are mechanistically linked. Detected in the serum and cerebrospinal fluid of AIDS patient, VPR may also induce cell death to bystander cells. The sequence is that of Protein Vpr from Human immunodeficiency virus type 1 group M subtype B (isolate BRU/LAI) (HIV-1).